Here is a 224-residue protein sequence, read N- to C-terminus: Protein GrpE (224 aa).

The interval 27–77 (NQASEDIDQENQSEVVDDTTENEDASEEVYEEDTASEDGSKEKKSFFKKKE) is disordered. Positions 31-62 (EDIDQENQSEVVDDTTENEDASEEVYEEDTAS) are enriched in acidic residues.

It belongs to the GrpE family. As to quaternary structure, homodimer.

The protein localises to the cytoplasm. Participates actively in the response to hyperosmotic and heat shock by preventing the aggregation of stress-denatured proteins, in association with DnaK and GrpE. It is the nucleotide exchange factor for DnaK and may function as a thermosensor. Unfolded proteins bind initially to DnaJ; upon interaction with the DnaJ-bound protein, DnaK hydrolyzes its bound ATP, resulting in the formation of a stable complex. GrpE releases ADP from DnaK; ATP binding to DnaK triggers the release of the substrate protein, thus completing the reaction cycle. Several rounds of ATP-dependent interactions between DnaJ, DnaK and GrpE are required for fully efficient folding. This is Protein GrpE from Lachnoclostridium phytofermentans (strain ATCC 700394 / DSM 18823 / ISDg) (Clostridium phytofermentans).